A 643-amino-acid chain; its full sequence is Hepatoma-derived growth factor-related protein 2 (643 aa).

Positions 7 to 64 constitute a PWWP domain; it reads PGDLVFAKMKGYPHWPARIDDVKDGAVKPPPNKYPIFFYGTHETAFLAPKDLFPYEKC. 2 disordered regions span residues 88-450 and 548-643; these read PQAS…KKPE and LESQ…NQTS. A compositionally biased stretch (low complexity) spans 90–104; sequence ASYSLPPASVSSSDS. Basic and acidic residues predominate over residues 107–116; it reads PEEKSTARSD. The segment covering 176-187 has biased composition (acidic residues); that stretch reads SEEENSDSDQDF. Residues 194–204 show a composition bias toward polar residues; it reads PRIQRRTTNLG. Residues 209 to 231 show a composition bias toward basic and acidic residues; sequence IFAESDSKSDESEDEKKEEEQKK. Over residues 232–249 the composition is skewed to low complexity; the sequence is SPSSSSASSPSLSSSDSE. Basic and acidic residues-rich tracts occupy residues 290–353, 373–382, and 417–450; these read SVDR…DSSK, EDKKPVKEVK, and RPSESARKTNQKEKRGERPRGRPSKVEKEKKKPE. The stretch at 295 to 345 forms a coiled coil; it reads SEWKKRDEERRRELEERRKKEQEEQLRRLREEEREEEERKKREKAEKGDKS. The span at 549 to 559 shows a compositional bias: polar residues; sequence ESQQKTVQKVN. Composition is skewed to basic and acidic residues over residues 560–575 and 608–622; these read TAEKDPEEEKQTGKVE and NKTEMETKQNNHAEH.

It belongs to the HDGF family.

The protein resides in the nucleus. It is found in the cytoplasm. May act as a regulator of myogenesis. Promotes the repair of DNA double-strand breaks (DSBs) through the homologous recombination pathway by facilitating the recruitment of the DNA endonuclease RBBP8 to the DSBs. The chain is Hepatoma-derived growth factor-related protein 2 (hdgfl2) from Xenopus tropicalis (Western clawed frog).